A 298-amino-acid polypeptide reads, in one-letter code: Ethanolamine ammonia-lyase small subunit (298 aa).

The tract at residues 1–19 is targets protein to the BMC; it reads MDQKQIEEIVRSVMASMGQ. Adenosylcob(III)alamin is bound by residues Val210, Glu231, and Cys261.

It belongs to the EutC family. In terms of assembly, the basic unit is a heterodimer which dimerizes to form tetramers. The heterotetramers trimerize; 6 large subunits form a core ring with 6 small subunits projecting outwards. Interacts with EutS, which targets it to the interior of the BMC. Adenosylcob(III)alamin is required as a cofactor.

The protein resides in the bacterial microcompartment. It carries out the reaction ethanolamine = acetaldehyde + NH4(+). Its pathway is amine and polyamine degradation; ethanolamine degradation. In terms of biological role, catalyzes the deamination of various vicinal amino-alcohols to oxo compounds. It is spontaneously inactivated by its substrate and reactivated by EutA. May play a role in bacterial microcompartment (BMC) assembly or maintenance. Directly targeted to the BMC. Expression of the eut operon allows this bacteria to use ethanolamine (EA) as a carbon, nitrogen and energy source. It relies on cobalamin (vitamin B12) both as a cofactor for the ethanolamine ammonia-lyase activity and to induce the operon. EA enhances bacterial survival in macrophages in a concentration-dependent manner, suggesting it is an important nutrient during infection. The chain is Ethanolamine ammonia-lyase small subunit from Salmonella typhimurium (strain LT2 / SGSC1412 / ATCC 700720).